Here is a 545-residue protein sequence, read N- to C-terminus: Glucose-6-phosphate isomerase (545 aa).

Catalysis depends on Glu-351, which acts as the Proton donor. Active-site residues include His-382 and Lys-510.

Belongs to the GPI family.

The protein localises to the cytoplasm. It carries out the reaction alpha-D-glucose 6-phosphate = beta-D-fructose 6-phosphate. It functions in the pathway carbohydrate biosynthesis; gluconeogenesis. It participates in carbohydrate degradation; glycolysis; D-glyceraldehyde 3-phosphate and glycerone phosphate from D-glucose: step 2/4. Functionally, catalyzes the reversible isomerization of glucose-6-phosphate to fructose-6-phosphate. The polypeptide is Glucose-6-phosphate isomerase (Shewanella amazonensis (strain ATCC BAA-1098 / SB2B)).